The following is a 350-amino-acid chain: Phenylalanine--tRNA ligase alpha subunit (350 aa).

Residue E260 participates in Mg(2+) binding.

The protein belongs to the class-II aminoacyl-tRNA synthetase family. Phe-tRNA synthetase alpha subunit type 1 subfamily. As to quaternary structure, tetramer of two alpha and two beta subunits. The cofactor is Mg(2+).

The protein resides in the cytoplasm. It carries out the reaction tRNA(Phe) + L-phenylalanine + ATP = L-phenylalanyl-tRNA(Phe) + AMP + diphosphate + H(+). This Mycoplasma capricolum subsp. capricolum (strain California kid / ATCC 27343 / NCTC 10154) protein is Phenylalanine--tRNA ligase alpha subunit.